The primary structure comprises 583 residues: Isocitrate dehydrogenase kinase/phosphatase (583 aa).

Residues 315 to 321 (APGIRGM) and Lys-336 each bind ATP. Asp-371 is a catalytic residue.

It belongs to the AceK family.

Its subcellular location is the cytoplasm. It catalyses the reaction L-seryl-[isocitrate dehydrogenase] + ATP = O-phospho-L-seryl-[isocitrate dehydrogenase] + ADP + H(+). Its function is as follows. Bifunctional enzyme which can phosphorylate or dephosphorylate isocitrate dehydrogenase (IDH) on a specific serine residue. This is a regulatory mechanism which enables bacteria to bypass the Krebs cycle via the glyoxylate shunt in response to the source of carbon. When bacteria are grown on glucose, IDH is fully active and unphosphorylated, but when grown on acetate or ethanol, the activity of IDH declines drastically concomitant with its phosphorylation. This chain is Isocitrate dehydrogenase kinase/phosphatase, found in Salmonella dublin (strain CT_02021853).